A 191-amino-acid polypeptide reads, in one-letter code: Polysulfide reductase chain B (191 aa).

4Fe-4S ferredoxin-type domains follow at residues 5-34 (YGMI…PDSV), 50-83 (GTLS…VNED), and 84-113 (GIVS…VDPV). 16 residues coordinate [4Fe-4S] cluster: C14, C17, C20, C24, C61, C64, C69, C73, C93, C96, C99, C103, C120, C123, C136, and C140.

In terms of assembly, functional polysulfide reductase is made up of three different (A, B, and C) subunits.

In terms of biological role, component of the phosphorylative electron transport system with polysulfide as the terminal acceptor. The polypeptide is Polysulfide reductase chain B (psrB) (Wolinella succinogenes (strain ATCC 29543 / DSM 1740 / CCUG 13145 / JCM 31913 / LMG 7466 / NCTC 11488 / FDC 602W) (Vibrio succinogenes)).